We begin with the raw amino-acid sequence, 191 residues long: Large ribosomal subunit protein bL9 (191 aa).

A disordered region spans residues Glu-171–Glu-191.

Belongs to the bacterial ribosomal protein bL9 family.

Binds to the 23S rRNA. The sequence is that of Large ribosomal subunit protein bL9 from Rhizobium meliloti (strain 1021) (Ensifer meliloti).